Reading from the N-terminus, the 184-residue chain is Holliday junction branch migration complex subunit RuvA (184 aa).

Residues 1–64 form a domain I region; sequence MIRAIEGIIT…EDANLLYGFL (64 aa). Residues 65–144 are domain II; the sequence is DTNEQKMFEM…SDESVPGYQN (80 aa). N144 is a region of interest (flexible linker). The domain III stretch occupies residues 144–184; the sequence is NEALLALEALGFKREKIVKILPDLKSTSTSELVKEALKKLA.

Belongs to the RuvA family. In terms of assembly, homotetramer. Forms an RuvA(8)-RuvB(12)-Holliday junction (HJ) complex. HJ DNA is sandwiched between 2 RuvA tetramers; dsDNA enters through RuvA and exits via RuvB. An RuvB hexamer assembles on each DNA strand where it exits the tetramer. Each RuvB hexamer is contacted by two RuvA subunits (via domain III) on 2 adjacent RuvB subunits; this complex drives branch migration. In the full resolvosome a probable DNA-RuvA(4)-RuvB(12)-RuvC(2) complex forms which resolves the HJ.

It localises to the cytoplasm. Its function is as follows. The RuvA-RuvB-RuvC complex processes Holliday junction (HJ) DNA during genetic recombination and DNA repair, while the RuvA-RuvB complex plays an important role in the rescue of blocked DNA replication forks via replication fork reversal (RFR). RuvA specifically binds to HJ cruciform DNA, conferring on it an open structure. The RuvB hexamer acts as an ATP-dependent pump, pulling dsDNA into and through the RuvAB complex. HJ branch migration allows RuvC to scan DNA until it finds its consensus sequence, where it cleaves and resolves the cruciform DNA. The chain is Holliday junction branch migration complex subunit RuvA from Campylobacter curvus (strain 525.92).